The sequence spans 472 residues: Methylenetetrahydrofolate--tRNA-(uracil-5-)-methyltransferase TrmFO (472 aa).

Gly-15–Gly-20 serves as a coordination point for FAD.

The protein belongs to the MnmG family. TrmFO subfamily. FAD serves as cofactor.

The protein localises to the cytoplasm. It catalyses the reaction uridine(54) in tRNA + (6R)-5,10-methylene-5,6,7,8-tetrahydrofolate + NADH + H(+) = 5-methyluridine(54) in tRNA + (6S)-5,6,7,8-tetrahydrofolate + NAD(+). It carries out the reaction uridine(54) in tRNA + (6R)-5,10-methylene-5,6,7,8-tetrahydrofolate + NADPH + H(+) = 5-methyluridine(54) in tRNA + (6S)-5,6,7,8-tetrahydrofolate + NADP(+). Its function is as follows. Catalyzes the folate-dependent formation of 5-methyl-uridine at position 54 (M-5-U54) in all tRNAs. This is Methylenetetrahydrofolate--tRNA-(uracil-5-)-methyltransferase TrmFO from Rhizobium meliloti (strain 1021) (Ensifer meliloti).